The sequence spans 124 residues: MKLSALVFVASVMLVAASPVKDVEEPVETHLAADLKTIEELAKYEEAAVQKRSCIVGSKNIGETCVASCQCCGATVRCIGEGTKGICNNYQTNNILGQILLYAKDTVVNTAGLLVCAQDLSEYE.

The signal sequence occupies residues 1–17 (MKLSALVFVASVMLVAA). Positions 18 to 52 (SPVKDVEEPVETHLAADLKTIEELAKYEEAAVQKR) are excised as a propeptide. 4 disulfide bridges follow: C54-C72, C65-C78, C69-C116, and C71-C87.

In terms of tissue distribution, expressed by the venom gland.

It localises to the secreted. In terms of biological role, no toxicity is observed upon intracranial injection into mice and intrathorax injection into crickets. This Macrothele gigas (Japanese funnel web spider) protein is U13-hexatoxin-Mg1a.